Reading from the N-terminus, the 263-residue chain is Hydroxyethylthiazole kinase (263 aa).

Met-41 contacts substrate. ATP-binding residues include Arg-117 and Thr-163. A substrate-binding site is contributed by Gly-190.

Belongs to the Thz kinase family. The cofactor is Mg(2+).

It carries out the reaction 5-(2-hydroxyethyl)-4-methylthiazole + ATP = 4-methyl-5-(2-phosphooxyethyl)-thiazole + ADP + H(+). The protein operates within cofactor biosynthesis; thiamine diphosphate biosynthesis; 4-methyl-5-(2-phosphoethyl)-thiazole from 5-(2-hydroxyethyl)-4-methylthiazole: step 1/1. Catalyzes the phosphorylation of the hydroxyl group of 4-methyl-5-beta-hydroxyethylthiazole (THZ). The protein is Hydroxyethylthiazole kinase of Exiguobacterium sp. (strain ATCC BAA-1283 / AT1b).